A 667-amino-acid chain; its full sequence is Zeaxanthin epoxidase, chloroplastic (667 aa).

Residues 1-59 constitute a chloroplast transit peptide; that stretch reads MGSTPFCYSINPSPSKLDFTRTHVFSPVSKQFYLDLSSFSGKPGGVSGFRSRRALLGVK. FAD is bound by residues 82–110 and 360–373; these read RVLV…LVFE and GFTW…LLGD. The region spanning 558–612 is the FHA domain; that stretch reads CIVGSEPDQDFPGMRIVIPSSQVSKMHARVIYKDGAFFLMDLRSEHGTYVTDNEG.

It depends on FAD as a cofactor. Expressed in leaves, stems and flowers, and at lower levels in roots and siliques.

It is found in the plastid. The protein localises to the chloroplast. It carries out the reaction all-trans-zeaxanthin + 4 reduced [2Fe-2S]-[ferredoxin] + 2 O2 + 4 H(+) = all-trans-violaxanthin + 4 oxidized [2Fe-2S]-[ferredoxin] + 2 H2O. The protein operates within plant hormone biosynthesis; abscisate biosynthesis. Its function is as follows. Zeaxanthin epoxidase that plays an important role in the xanthophyll cycle and abscisic acid (ABA) biosynthesis. Converts zeaxanthin into antheraxanthin and subsequently violaxanthin. Required for resistance to osmotic and drought stresses, ABA-dependent stomatal closure, seed development and dormancy, modulation of defense gene expression and disease resistance and non-photochemical quencing (NPQ). Through its role in ABA biosynthesis, regulates the expression of stress-responsive genes such as RD29A during osmotic stress and is required for normal plant growth during vegetative development. Is required for late skotomorphogenic growth through its role in the xanthophyll carotenoids neoxanthin, violaxanthin and antheraxanthin biosynthesis. Required for beta-aminobutyric acid (BABA)-induced priming in disease resistance, tolerance to salt and drought stresses and sterility. Participates in NPQ by regulating the level of zeaxanthin in photosynthetic energy conversion. NPQ is a process that maintains the balance between dissipation and utilization of light energy to minimize the generation of oxidizing molecules and the molecular damages they can generate. The polypeptide is Zeaxanthin epoxidase, chloroplastic (ZEP) (Arabidopsis thaliana (Mouse-ear cress)).